Here is a 163-residue protein sequence, read N- to C-terminus: Low molecular weight protein-tyrosine phosphatase A (163 aa).

The active-site Nucleophile is the Cys-11. Arg-17 is a catalytic residue. Residue Asp-126 is the Proton donor of the active site.

It belongs to the low molecular weight phosphotyrosine protein phosphatase family.

The catalysed reaction is O-phospho-L-tyrosyl-[protein] + H2O = L-tyrosyl-[protein] + phosphate. In terms of biological role, key virulence factor required for mycobacterial survival within host macrophages. Exhibits protein tyrosine phosphatase activity. Functionally, supports mycobacteria survival during infection by modulation of the phagosome maturation and modulation of the normal host signaling pathways, including host innate immune responses and cell apoptosis. This Mycobacterium bovis (strain ATCC BAA-935 / AF2122/97) protein is Low molecular weight protein-tyrosine phosphatase A (ptpA).